Consider the following 417-residue polypeptide: Hydrogen cyanide synthase subunit HcnC (417 aa).

Residues 1-18 (MNRTYDIVIAGGGVIGAS) form the signal peptide. Residue 7 to 21 (IVIAGGGVIGASCAY) participates in FAD binding. The N-palmitoyl cysteine moiety is linked to residue Cys-19. Cys-19 carries S-diacylglycerol cysteine lipidation. The chain crosses the membrane as a helical span at residues 46–66 (SAGGLWAIGESVGLGCGVIFF).

Belongs to the FAD-dependent glycerol-3-phosphate dehydrogenase family. In terms of assembly, heterotrimer of HcnA, HcnB and HcnC. It depends on FAD as a cofactor.

The protein localises to the cell membrane. It catalyses the reaction glycine + 2 A = hydrogen cyanide + 2 AH2 + CO2. Its activity is regulated as follows. Oxygen is necessary for cyanogenesis. Activated by succinate, glycine methyl ester, glucose and D,L-methionine in addition to glycine. Phenazine methosulfate, methylene blue, 2,6-dichlorophenolindophenol (DCIP) and ferricyanide can replace oxygen for the reaction. Inhibited by pyrrolnitrin and acriflavine at 1 mM concentration. Its function is as follows. A three-component membrane-bound flavoenzyme that catalyzes the formation of hydrogen cyanide, a secondary metabolite, by transfer of electrons to a cyanide-resistant branch of the aerobic respiratory chain. The sequence is that of Hydrogen cyanide synthase subunit HcnC from Pseudomonas aeruginosa (strain ATCC 15692 / DSM 22644 / CIP 104116 / JCM 14847 / LMG 12228 / 1C / PRS 101 / PAO1).